Here is a 133-residue protein sequence, read N- to C-terminus: Ribonuclease P protein component (133 aa).

It belongs to the RnpA family. As to quaternary structure, consists of a catalytic RNA component (M1 or rnpB) and a protein subunit.

The catalysed reaction is Endonucleolytic cleavage of RNA, removing 5'-extranucleotides from tRNA precursor.. Its function is as follows. RNaseP catalyzes the removal of the 5'-leader sequence from pre-tRNA to produce the mature 5'-terminus. It can also cleave other RNA substrates such as 4.5S RNA. The protein component plays an auxiliary but essential role in vivo by binding to the 5'-leader sequence and broadening the substrate specificity of the ribozyme. The protein is Ribonuclease P protein component of Pseudomonas savastanoi pv. phaseolicola (strain 1448A / Race 6) (Pseudomonas syringae pv. phaseolicola (strain 1448A / Race 6)).